The sequence spans 235 residues: Serine protease SplA (235 aa).

The first 35 residues, 1–35 (MNKNVMIKGLTALTILTSLGFAENISDQPHSIAKA), serve as a signal peptide directing secretion. Active-site charge relay system residues include His-74, Asp-113, and Ser-189.

It belongs to the peptidase S1B family.

It is found in the secreted. This chain is Serine protease SplA (splA), found in Staphylococcus aureus.